The sequence spans 286 residues: Probable endonuclease LCL3 (286 aa).

A disordered region spans residues 1 to 29 (MSGSYSPQKDPQHPTQHQQFPPTPPYPSS). The helical transmembrane segment at 41-61 (VFIGIGSAAGASALTLLGVMG) threads the bilayer. A TNase-like domain is found at 84–243 (AWIKGIVTSV…RDAKRGLWAL (160 aa)). Arginine 133 is an active-site residue. Ca(2+) is bound at residue aspartate 138. Active-site residues include glutamate 141 and arginine 181.

Belongs to the LCL3 family.

The protein resides in the mitochondrion. Its subcellular location is the membrane. In Cryptococcus gattii serotype B (strain WM276 / ATCC MYA-4071) (Filobasidiella gattii), this protein is Probable endonuclease LCL3 (LCL3).